The following is a 567-amino-acid chain: MHGRLKVKTSEEQAEAKRLEREQKLKLYQSATQAVFQKRQAGELDESVLELTSQILGANPDFATLWNCRREVLQQLETQKSPEELAALVKAELGFLESCLRVNPKSYGTWHHRCWLLGRLPEPNWTRELELCARFLEVDERNFHCWDYRRFVATQAAVPPAEELAFTDSLITRNFSNYSSWHYRSCLLPQLHPQPDSGPQGRLPEDVLLKELELVQNAFFTDPNDQSAWFYHRWLLGRADPQDALRCLHVSRDEACLTVSFSRPLLVGSRMEILLLMVDDSPLIVEWRTPDGRNRPSHVWLCDLPAASLNDQLPQHTFRVIWTAGDVQKECVLLKGRQEGWCRDSTTDEQLFRCELSVEKSTVLQSELESCKELQELEPENKWCLLTIILLMRALDPLLYEKETLQYFQTLKAVDPMRATYLDDLRSKFLLENSVLKMEYAEVRVLHLAHKDLTVLCHLEQLLLVTHLDLSHNRLRTLPPALAALRCLEVLQASDNAIESLDGVTNLPRLQELLLCNNRLQQPAVLQPLASCPRLVLLNLQGNPLCQAVGILEQLAELLPSVSSVLT.

6 PFTA repeats span residues 44-78, 88-122, 124-158, 159-193, 207-241, and 363-397; these read LDES…QLET, LVKA…RLPE, NWTR…QAAV, PPAE…QLHP, VLLK…RADP, and VLQS…ALDP. A Phosphoserine modification is found at Ser98. LRR repeat units lie at residues 442–463, 464–486, 487–508, 509–530, and 534–555; these read EVRV…EQLL, LVTH…AALR, CLEV…TNLP, RLQE…QPLA, and RLVL…LEQL.

This sequence belongs to the protein prenyltransferase subunit alpha family. Heterotrimer composed of RABGGTA, RABGGTB and CHM; within this trimer, RABGGTA and RABGGTB form the catalytic component B, while CHM (component A) mediates peptide substrate binding. The Rab GGTase dimer (RGGT) interacts with CHM (component A) prior to Rab protein binding; the association is stabilized by geranylgeranyl pyrophosphate (GGpp). The CHM:RGGT:Rab complex is destabilized by GGpp. Interacts with non-phosphorylated form of RAB8A; phosphorylation of RAB8A at 'Thr-72' disrupts this interaction.

It catalyses the reaction geranylgeranyl diphosphate + L-cysteinyl-[protein] = S-geranylgeranyl-L-cysteinyl-[protein] + diphosphate. The enzymatic reaction requires the aid of a Rab escort protein (also called component A), such as CHM. Functionally, catalyzes the transfer of a geranylgeranyl moiety from geranylgeranyl diphosphate to both cysteines of Rab proteins with the C-terminal sequence -XXCC, -XCXC and -CCXX, such as RAB1A, RAB3A, RAB5A and RAB7A. The chain is Geranylgeranyl transferase type-2 subunit alpha (RABGGTA) from Homo sapiens (Human).